The primary structure comprises 388 residues: (S)-8-oxocitronellyl enol synthase (388 aa).

NADP(+) contacts are provided by residues Thr-38–Ile-40, Arg-66–Arg-67, Asp-84–Val-85, Ser-108–Trp-109, and Gln-142. Active-site residues include Lys-146 and Tyr-178. Residues Lys-146 and Tyr-178 each contribute to the substrate site. NADP(+) contacts are provided by residues Tyr-178, Val-204, and Ser-211 to Met-213. Residue Ser-349 participates in substrate binding.

It belongs to the short-chain dehydrogenases/reductases (SDR) family. Highly divergent. In terms of assembly, homodimer. Expressed in internal phloem-associated parenchyma (IPAP) cells.

The protein resides in the cytoplasm. It is found in the cytosol. The enzyme catalyses (S)-8-oxocitronellyl enol + NADP(+) = (6E)-8-oxogeranial + NADPH + H(+). It catalyses the reaction (S)-8-oxocitronellyl enol + NAD(+) = (6E)-8-oxogeranial + NADH + H(+). Functionally, iridoid synthase that catalyzes the first step in generation of the iridoid ring scaffold using the linear monoterpene (6E)-8-oxogeranial as substrate. Iridoids comprise a large family of distinctive bicyclic monoterpenes that possess a wide range of pharmacological activities, including anticancer, anti-inflammatory, antifungal and antibacterial activities. The chain is (S)-8-oxocitronellyl enol synthase from Catharanthus roseus (Madagascar periwinkle).